The following is a 366-amino-acid chain: tRNA/tmRNA (uracil-C(5))-methyltransferase (366 aa).

Q190, Y218, N223, E239, and D299 together coordinate S-adenosyl-L-methionine. Catalysis depends on C324, which acts as the Nucleophile. Catalysis depends on E358, which acts as the Proton acceptor.

It belongs to the class I-like SAM-binding methyltransferase superfamily. RNA M5U methyltransferase family. TrmA subfamily.

It catalyses the reaction uridine(54) in tRNA + S-adenosyl-L-methionine = 5-methyluridine(54) in tRNA + S-adenosyl-L-homocysteine + H(+). The enzyme catalyses uridine(341) in tmRNA + S-adenosyl-L-methionine = 5-methyluridine(341) in tmRNA + S-adenosyl-L-homocysteine + H(+). Its function is as follows. Dual-specificity methyltransferase that catalyzes the formation of 5-methyluridine at position 54 (m5U54) in all tRNAs, and that of position 341 (m5U341) in tmRNA (transfer-mRNA). The polypeptide is tRNA/tmRNA (uracil-C(5))-methyltransferase (Edwardsiella ictaluri (strain 93-146)).